Reading from the N-terminus, the 257-residue chain is NAD-capped RNA hydrolase NudC (257 aa).

Arginine 69 serves as a coordination point for substrate. Positions 98 and 101 each coordinate Zn(2+). A substrate-binding site is contributed by glutamate 111. 2 residues coordinate Zn(2+): cysteine 116 and cysteine 119. Tyrosine 124 contacts substrate. One can recognise a Nudix hydrolase domain in the interval 125-248 (PQIAPCIIVA…TVARRLIEDT (124 aa)). A divalent metal cation contacts are provided by alanine 158, glutamate 174, and glutamate 178. The Nudix box signature appears at 159–180 (GFVEVGETLEQAVAREVMEESG). 192-199 (QPWPFPQS) is a binding site for substrate. Position 219 (glutamate 219) interacts with a divalent metal cation. Position 241 (alanine 241) interacts with substrate.

Belongs to the Nudix hydrolase family. NudC subfamily. In terms of assembly, homodimer. Mg(2+) is required as a cofactor. Requires Mn(2+) as cofactor. The cofactor is Zn(2+).

It carries out the reaction a 5'-end NAD(+)-phospho-ribonucleoside in mRNA + H2O = a 5'-end phospho-adenosine-phospho-ribonucleoside in mRNA + beta-nicotinamide D-ribonucleotide + 2 H(+). The enzyme catalyses NAD(+) + H2O = beta-nicotinamide D-ribonucleotide + AMP + 2 H(+). It catalyses the reaction NADH + H2O = reduced beta-nicotinamide D-ribonucleotide + AMP + 2 H(+). MRNA decapping enzyme that specifically removes the nicotinamide adenine dinucleotide (NAD) cap from a subset of mRNAs by hydrolyzing the diphosphate linkage to produce nicotinamide mononucleotide (NMN) and 5' monophosphate mRNA. The NAD-cap is present at the 5'-end of some mRNAs and stabilizes RNA against 5'-processing. Has preference for mRNAs with a 5'-end purine. Catalyzes the hydrolysis of a broad range of dinucleotide pyrophosphates. The chain is NAD-capped RNA hydrolase NudC from Salmonella schwarzengrund (strain CVM19633).